The primary structure comprises 316 residues: Acetyl-coenzyme A carboxylase carboxyl transferase subunit alpha (316 aa).

Positions 36–290 (LLEERLARLR…KEALLKALEE (255 aa)) constitute a CoA carboxyltransferase C-terminal domain.

It belongs to the AccA family. As to quaternary structure, acetyl-CoA carboxylase is a heterohexamer composed of biotin carboxyl carrier protein (AccB), biotin carboxylase (AccC) and two subunits each of ACCase subunit alpha (AccA) and ACCase subunit beta (AccD).

The protein localises to the cytoplasm. The enzyme catalyses N(6)-carboxybiotinyl-L-lysyl-[protein] + acetyl-CoA = N(6)-biotinyl-L-lysyl-[protein] + malonyl-CoA. It functions in the pathway lipid metabolism; malonyl-CoA biosynthesis; malonyl-CoA from acetyl-CoA: step 1/1. In terms of biological role, component of the acetyl coenzyme A carboxylase (ACC) complex. First, biotin carboxylase catalyzes the carboxylation of biotin on its carrier protein (BCCP) and then the CO(2) group is transferred by the carboxyltransferase to acetyl-CoA to form malonyl-CoA. The sequence is that of Acetyl-coenzyme A carboxylase carboxyl transferase subunit alpha from Thermus thermophilus (strain ATCC 27634 / DSM 579 / HB8).